The sequence spans 317 residues: Beta-ketoacyl-[acyl-carrier-protein] synthase III (317 aa).

Active-site residues include Cys-112 and His-244. An ACP-binding region spans residues 245-249; sequence QANLR. Residue Asn-274 is part of the active site.

The protein belongs to the thiolase-like superfamily. FabH family. In terms of assembly, homodimer.

It is found in the cytoplasm. It catalyses the reaction malonyl-[ACP] + acetyl-CoA + H(+) = 3-oxobutanoyl-[ACP] + CO2 + CoA. It functions in the pathway lipid metabolism; fatty acid biosynthesis. Catalyzes the condensation reaction of fatty acid synthesis by the addition to an acyl acceptor of two carbons from malonyl-ACP. Catalyzes the first condensation reaction which initiates fatty acid synthesis and may therefore play a role in governing the total rate of fatty acid production. Possesses both acetoacetyl-ACP synthase and acetyl transacylase activities. Its substrate specificity determines the biosynthesis of branched-chain and/or straight-chain of fatty acids. The polypeptide is Beta-ketoacyl-[acyl-carrier-protein] synthase III (Enterobacter sp. (strain 638)).